A 161-amino-acid chain; its full sequence is Peroxynitrite isomerase 2 (161 aa).

The GXWXGXG signature appears at 17–23 (GTWAGQG). Position 152 (His-152) interacts with heme b.

This sequence belongs to the nitrobindin family. In terms of assembly, homodimer. Heme b is required as a cofactor.

It carries out the reaction peroxynitrite = nitrate. It participates in nitrogen metabolism. Its function is as follows. Heme-binding protein able to scavenge peroxynitrite and to protect free L-tyrosine against peroxynitrite-mediated nitration, by acting as a peroxynitrite isomerase that converts peroxynitrite to nitrate. Therefore, this protein likely plays a role in peroxynitrite sensing and in the detoxification of reactive nitrogen and oxygen species (RNS and ROS, respectively). Is able to bind nitric oxide (NO) in vitro, but may act as a sensor of peroxynitrite levels in vivo. The protein is Peroxynitrite isomerase 2 of Mycobacterium ulcerans (strain Agy99).